A 296-amino-acid chain; its full sequence is GTPase Era (296 aa).

The Era-type G domain occupies 3 to 170 (KSGFVTIVGR…KELMFKYIPE (168 aa)). The tract at residues 11 to 18 (GRPNVGKS) is G1. 11-18 (GRPNVGKS) serves as a coordination point for GTP. Residues 37-41 (QTTRN) are G2. The segment at 58 to 61 (DTPG) is G3. GTP-binding positions include 58 to 62 (DTPGI) and 120 to 123 (NKID). The G4 stretch occupies residues 120 to 123 (NKID). The interval 149-151 (ISA) is G5. The 78-residue stretch at 201-278 (LSEEVPHGIA…YIRLWVKVKE (78 aa)) folds into the KH type-2 domain.

This sequence belongs to the TRAFAC class TrmE-Era-EngA-EngB-Septin-like GTPase superfamily. Era GTPase family. As to quaternary structure, monomer.

The protein resides in the cytoplasm. It localises to the cell membrane. In terms of biological role, an essential GTPase that binds both GDP and GTP, with rapid nucleotide exchange. Plays a role in 16S rRNA processing and 30S ribosomal subunit biogenesis and possibly also in cell cycle regulation and energy metabolism. This is GTPase Era from Clostridium botulinum (strain 657 / Type Ba4).